The chain runs to 254 residues: Proteasome activator complex subunit 3 (254 aa).

Residues lysine 6 and lysine 14 each carry the N6-acetyllysine modification. Lysine 195 is modified (N6-acetyllysine; by P300/CBP).

In terms of assembly, homoheptamer. Post-translationally, acetylation at the major site Lys-195 is important for oligomerization and ability to degrade its target substrates. Deacetylated by SIRT1.

Functionally, implicated in immunoproteasome assembly and required for efficient antigen processing. The PA28 activator complex enhances the generation of class I binding peptides by altering the cleavage pattern of the proteasome. The sequence is that of Proteasome activator complex subunit 3 from Gallus gallus (Chicken).